Here is a 207-residue protein sequence, read N- to C-terminus: Glutathione S-transferase 4 (207 aa).

The 78-residue stretch at 2–79 (PNYKLLYFDA…YLARKFGLAG (78 aa)) folds into the GST N-terminal domain. Residues Y8, W39, K43, 49–51 (GQL), and 63–64 (QS) each bind glutathione. One can recognise a GST C-terminal domain in the interval 81-207 (TAEEEAYADS…YVATRKDSIV (127 aa)).

This sequence belongs to the GST superfamily. Sigma family.

The catalysed reaction is RX + glutathione = an S-substituted glutathione + a halide anion + H(+). In terms of biological role, conjugation of reduced glutathione to a wide number of exogenous and endogenous hydrophobic electrophiles. May play a role in the detoxification of reactive oxygen species produced during pathogenic bacterial infection. This is Glutathione S-transferase 4 from Caenorhabditis elegans.